The primary structure comprises 585 residues: Chaperonin CPN60-like 1, mitochondrial (585 aa).

The transit peptide at 1–32 directs the protein to the mitochondrion; that stretch reads MYRLVSNVASKARIARKCTSQIGSRLNSTRNY.

Belongs to the chaperonin (HSP60) family.

The protein resides in the mitochondrion. Functionally, implicated in mitochondrial protein import and macromolecular assembly. May facilitate the correct folding of imported proteins. May also prevent misfolding and promote the refolding and proper assembly of unfolded polypeptides generated under stress conditions in the mitochondrial matrix. This Arabidopsis thaliana (Mouse-ear cress) protein is Chaperonin CPN60-like 1, mitochondrial.